The sequence spans 1246 residues: DNA-directed RNA polymerase subunit beta (1246 aa).

The tract at residues 1171 to 1246 is disordered; sequence IDDDAGEMSL…EFDGYNDFKA (76 aa). 2 stretches are compositionally biased toward acidic residues: residues 1202-1223 and 1230-1240; these read DEEE…EDFE and EYAEDDDEFDG.

Belongs to the RNA polymerase beta chain family. As to quaternary structure, the RNAP catalytic core consists of 2 alpha, 1 beta, 1 beta' and 1 omega subunit. When a sigma factor is associated with the core the holoenzyme is formed, which can initiate transcription.

The catalysed reaction is RNA(n) + a ribonucleoside 5'-triphosphate = RNA(n+1) + diphosphate. Its function is as follows. DNA-dependent RNA polymerase catalyzes the transcription of DNA into RNA using the four ribonucleoside triphosphates as substrates. The polypeptide is DNA-directed RNA polymerase subunit beta (Alkaliphilus metalliredigens (strain QYMF)).